A 319-amino-acid chain; its full sequence is GCN5-related N-acetyltransferase 5, chloroplastic (319 aa).

A chloroplast-targeting transit peptide spans 1–55 (MAALSISLAFSVDSLKPTQSTKFGFSSSSHRYPLLYSCKSHRSNLRFAFPPSSVS). One can recognise an N-acetyltransferase domain in the interval 109–297 (MWVRVMRHEE…KHLMRKKLLP (189 aa)). Acetyl-CoA-binding positions include 218–220 (MTV), 226–231 (RRGIGW), 258–260 (DEA), and tyrosine 265. Catalysis depends on tyrosine 265, which acts as the Proton donor.

This sequence belongs to the acetyltransferase family. GNAT subfamily. Oligomer. Autoacetylated. In terms of tissue distribution, expressed in green tissues.

It localises to the plastid. The protein resides in the chloroplast. It carries out the reaction an N-terminal L-alpha-aminoacyl-[protein] + acetyl-CoA = N-terminal N(alpha)-acetyl-L-alpha-aminoacyl-[protein] + CoA + H(+). It catalyses the reaction L-lysyl-[protein] + acetyl-CoA = N(6)-acetyl-L-lysyl-[protein] + CoA + H(+). The catalysed reaction is N-terminal L-alanyl-[protein] + acetyl-CoA = N-terminal N(alpha)-acetyl-L-alanyl-[protein] + CoA + H(+). The enzyme catalyses N-terminal L-seryl-[protein] + acetyl-CoA = N-terminal N(alpha)-acetyl-L-seryl-[protein] + CoA + H(+). It carries out the reaction N-terminal L-methionyl-[protein] + acetyl-CoA = N-terminal N(alpha)-acetyl-L-methionyl-[protein] + CoA + H(+). It catalyses the reaction N-terminal L-valyl-[protein] + acetyl-CoA = N-terminal N(alpha)-acetyl-L-valyl-[protein] + CoA + H(+). The catalysed reaction is N-terminal L-threonyl-[protein] + acetyl-CoA = N-terminal N(alpha)-acetyl-L-threonyl-[protein] + CoA + H(+). In terms of biological role, protein acetyltransferase with dual specificity triggering both N-alpha-acetylation (NTA), with a large spectrum of modified N-termini, including methionine, alanine, serine and to a lower extent threonine and valine as substrates, and epsilon-lysine acetylation (KA). In Arabidopsis thaliana (Mouse-ear cress), this protein is GCN5-related N-acetyltransferase 5, chloroplastic.